Here is a 278-residue protein sequence, read N- to C-terminus: PILR alpha-associated neural protein (278 aa).

The first 27 residues, 1 to 27 (MWSAQLLSQLLPLWPLLLLSVLPPAQG), serve as a signal peptide directing secretion. A disordered region spans residues 25 to 93 (AQGSSHRSPP…PSGFEEGPPS (69 aa)). Over 28–174 (SSHRSPPAPA…FGGRGEGVDP (147 aa)) the chain is Extracellular. An O-linked (GalNAc...) threonine glycan is attached at T136. Residues 175-195 (QLYVTITISIIIVLVATGIIF) traverse the membrane as a helical segment. Over 196–278 (KFCWDRSQKR…QLNRIPLVNL (83 aa)) the chain is Cytoplasmic. Positions 206–278 (RRPSGQQGAL…QLNRIPLVNL (73 aa)) are disordered. Residues 209-225 (SGQQGALRQEESQQPLT) are compositionally biased toward polar residues.

O-glycosylation at Thr-136 is essential for recognition by PILRA. In terms of tissue distribution, mainly expressed in brain and spinal cord. Weak expression also detected in heart, kidney, spleen and lymph node. Virtually no expression detected in liver and embryo relative to brain.

It localises to the membrane. Its function is as follows. Acts as a ligand for PILRA in neuronal tissues, where it may be involved in immune regulation. The chain is PILR alpha-associated neural protein (Pianp) from Mus musculus (Mouse).